The following is a 511-amino-acid chain: 2-isopropylmalate synthase (511 aa).

The 264-residue stretch at 6–269 (IIIFDTTLRD…YTDIKCENIF (264 aa)) folds into the Pyruvate carboxyltransferase domain. Mn(2+) contacts are provided by aspartate 15, histidine 203, histidine 205, and asparagine 239. The regulatory domain stretch occupies residues 394–511 (VIEKLSVISG…SLKVEERKMA (118 aa)).

This sequence belongs to the alpha-IPM synthase/homocitrate synthase family. LeuA type 1 subfamily. Homodimer. The cofactor is Mn(2+).

Its subcellular location is the cytoplasm. It catalyses the reaction 3-methyl-2-oxobutanoate + acetyl-CoA + H2O = (2S)-2-isopropylmalate + CoA + H(+). Its pathway is amino-acid biosynthesis; L-leucine biosynthesis; L-leucine from 3-methyl-2-oxobutanoate: step 1/4. In terms of biological role, catalyzes the condensation of the acetyl group of acetyl-CoA with 3-methyl-2-oxobutanoate (2-ketoisovalerate) to form 3-carboxy-3-hydroxy-4-methylpentanoate (2-isopropylmalate). The protein is 2-isopropylmalate synthase of Campylobacter jejuni (strain RM1221).